A 430-amino-acid chain; its full sequence is Adenylosuccinate synthetase (430 aa).

GTP contacts are provided by residues Gly-12 to Lys-18 and Gly-40 to Thr-42. Asp-13 serves as the catalytic Proton acceptor. Residues Asp-13 and Gly-40 each contribute to the Mg(2+) site. IMP contacts are provided by residues Asp-13 to Lys-16, Asn-38 to His-41, Thr-128, Arg-142, Gln-223, Thr-238, and Arg-302. His-41 serves as the catalytic Proton donor. Thr-298–Arg-304 contributes to the substrate binding site. Residues Arg-304, Ser-330–Asp-332, and Ser-412–Gly-414 each bind GTP.

This sequence belongs to the adenylosuccinate synthetase family. As to quaternary structure, homodimer. Mg(2+) is required as a cofactor.

The protein localises to the cytoplasm. The enzyme catalyses IMP + L-aspartate + GTP = N(6)-(1,2-dicarboxyethyl)-AMP + GDP + phosphate + 2 H(+). It participates in purine metabolism; AMP biosynthesis via de novo pathway; AMP from IMP: step 1/2. Plays an important role in the de novo pathway of purine nucleotide biosynthesis. Catalyzes the first committed step in the biosynthesis of AMP from IMP. This chain is Adenylosuccinate synthetase, found in Streptococcus equi subsp. zooepidemicus (strain H70).